Consider the following 387-residue polypeptide: 3-ketoacyl-CoA thiolase (387 aa).

The active-site Acyl-thioester intermediate is cysteine 91. Residues histidine 343 and cysteine 373 each act as proton acceptor in the active site.

Belongs to the thiolase-like superfamily. Thiolase family. As to quaternary structure, heterotetramer of two alpha chains (FadB) and two beta chains (FadA).

The protein localises to the cytoplasm. It carries out the reaction an acyl-CoA + acetyl-CoA = a 3-oxoacyl-CoA + CoA. It participates in lipid metabolism; fatty acid beta-oxidation. Its function is as follows. Catalyzes the final step of fatty acid oxidation in which acetyl-CoA is released and the CoA ester of a fatty acid two carbons shorter is formed. The chain is 3-ketoacyl-CoA thiolase from Escherichia fergusonii (strain ATCC 35469 / DSM 13698 / CCUG 18766 / IAM 14443 / JCM 21226 / LMG 7866 / NBRC 102419 / NCTC 12128 / CDC 0568-73).